A 245-amino-acid polypeptide reads, in one-letter code: Chromosome partition protein MukE (245 aa).

Residues 213–245 (PESIAAEKATADDESAVSNEEDFEYDDNQEGAE) form a disordered region. A compositionally biased stretch (acidic residues) spans 224-245 (DDESAVSNEEDFEYDDNQEGAE).

This sequence belongs to the MukE family. As to quaternary structure, interacts, and probably forms a ternary complex, with MukF and MukB. The complex formation is stimulated by calcium or magnesium.

The protein resides in the cytoplasm. Its subcellular location is the nucleoid. Functionally, involved in chromosome condensation, segregation and cell cycle progression. May participate in facilitating chromosome segregation by condensation DNA from both sides of a centrally located replisome during cell division. Probably acts via its interaction with MukB and MukF. This Actinobacillus succinogenes (strain ATCC 55618 / DSM 22257 / CCUG 43843 / 130Z) protein is Chromosome partition protein MukE.